We begin with the raw amino-acid sequence, 166 residues long: Small ribosomal subunit protein uS5 (166 aa).

The S5 DRBM domain occupies 11-74 (LQEKLVQVNR…EAARKNMVDV (64 aa)).

This sequence belongs to the universal ribosomal protein uS5 family. As to quaternary structure, part of the 30S ribosomal subunit. Contacts proteins S4 and S8.

Its function is as follows. With S4 and S12 plays an important role in translational accuracy. Functionally, located at the back of the 30S subunit body where it stabilizes the conformation of the head with respect to the body. In Marinobacter nauticus (strain ATCC 700491 / DSM 11845 / VT8) (Marinobacter aquaeolei), this protein is Small ribosomal subunit protein uS5.